Consider the following 219-residue polypeptide: 3-dehydroquinate dehydratase (219 aa).

3-dehydroquinate-binding positions include 34 to 36 and R63; that span reads ELR. Residue H114 is the Proton donor/acceptor of the active site. The Schiff-base intermediate with substrate role is filled by K139. R174, T193, and Q197 together coordinate 3-dehydroquinate.

This sequence belongs to the type-I 3-dehydroquinase family. Homodimer.

It carries out the reaction 3-dehydroquinate = 3-dehydroshikimate + H2O. The protein operates within metabolic intermediate biosynthesis; chorismate biosynthesis; chorismate from D-erythrose 4-phosphate and phosphoenolpyruvate: step 3/7. Involved in the third step of the chorismate pathway, which leads to the biosynthesis of aromatic amino acids. Catalyzes the cis-dehydration of 3-dehydroquinate (DHQ) and introduces the first double bond of the aromatic ring to yield 3-dehydroshikimate. The sequence is that of 3-dehydroquinate dehydratase from Sulfolobus acidocaldarius (strain ATCC 33909 / DSM 639 / JCM 8929 / NBRC 15157 / NCIMB 11770).